A 511-amino-acid chain; its full sequence is Pentatricopeptide repeat-containing protein At5g08510 (511 aa).

10 PPR repeats span residues 46–80, 81–115, 116–146, 147–181, 182–213, 214–248, 249–279, 281–315, 316–346, and 352–382; these read CTFL…GLRP, SHHT…GFES, DSFC…MSKR, DVPV…NVTS, WTTV…SVKP, NHIT…GFFD, NIYV…LGNQ, NLCS…GEKP, DAVT…MEEV, and KLEH…MPMK. Residues 387–462 form a type E motif region; it reads VWGTLLGACS…AAGYSYFVEV (76 aa). Residues 463–494 are type E(+) motif; the sequence is GVDVHKFTVEDKSHPRSYEIYQVLEEIFRRMK.

It belongs to the PPR family. PCMP-E subfamily.

This is Pentatricopeptide repeat-containing protein At5g08510 (PCMP-E20) from Arabidopsis thaliana (Mouse-ear cress).